The sequence spans 268 residues: Tryptophan synthase alpha chain (268 aa).

Active-site proton acceptor residues include E49 and D60.

The protein belongs to the TrpA family. In terms of assembly, tetramer of two alpha and two beta chains.

It catalyses the reaction (1S,2R)-1-C-(indol-3-yl)glycerol 3-phosphate + L-serine = D-glyceraldehyde 3-phosphate + L-tryptophan + H2O. The protein operates within amino-acid biosynthesis; L-tryptophan biosynthesis; L-tryptophan from chorismate: step 5/5. Its function is as follows. The alpha subunit is responsible for the aldol cleavage of indoleglycerol phosphate to indole and glyceraldehyde 3-phosphate. This Serratia proteamaculans (strain 568) protein is Tryptophan synthase alpha chain.